We begin with the raw amino-acid sequence, 483 residues long: PAT complex subunit CCDC47 (483 aa).

The N-terminal stretch at 1 to 20 (MKAFHTFCVVLLVFGSVSEA) is a signal peptide. Residues 21–135 (KFDDFEDEED…PAHLQNSWES (115 aa)) are Cytoplasmic-facing. The segment at 46–118 (MEDSVTESPQ…PDTSSSKNKD (73 aa)) is disordered. The span at 60-104 (TEDDEDETTVELEGQDENQEGDFEDADTQEGDTESEPYDDEEFEG) shows a compositional bias: acidic residues. A compositionally biased stretch (basic and acidic residues) spans 105–118 (YEDKPDTSSSKNKD). Residues 136–155 (YYLEILMVTGLLAYIMNYII) traverse the membrane as a helical segment. Residues 156-483 (GKNKNSRLAQ…KMKQIKVKAM (328 aa)) are Lumenal-facing. Asn-178 carries an N-linked (GlcNAc...) asparagine glycan. Residues 424 to 483 (QRQEAAQSRREEKKRAEKERIMNEEDPEKQRRLEEAALRREQKKLEKKQMKMKQIKVKAM) are disordered. The segment covering 430–472 (QSRREEKKRAEKERIMNEEDPEKQRRLEEAALRREQKKLEKKQ) has biased composition (basic and acidic residues). A coiled-coil region spans residues 450-483 (PEKQRRLEEAALRREQKKLEKKQMKMKQIKVKAM). Basic residues predominate over residues 473–483 (MKMKQIKVKAM).

Belongs to the CCDC47 family. Component of the PAT complex, composed of WDR83OS/Asterix and CCDC47. The PAT complex is part of the multi-pass translocon (MPT) complex, composed of three subcomplexes, the GEL complex (composed of RAB5IF/OPTI and TMCO1), the BOS complex (composed of NCLN/Nicalin, NOMO and TMEM147) and the PAT complex (composed of WDR83OS/Asterix and CCDC47). The MPT complex associates with the SEC61 complex. Interacts with VCP, HSPA5, DERL1, DERL2 and SELENOS.

Its subcellular location is the endoplasmic reticulum membrane. It localises to the rough endoplasmic reticulum membrane. In terms of biological role, component of the multi-pass translocon (MPT) complex that mediates insertion of multi-pass membrane proteins into the lipid bilayer of membranes. The MPT complex takes over after the SEC61 complex: following membrane insertion of the first few transmembrane segments of proteins by the SEC61 complex, the MPT complex occludes the lateral gate of the SEC61 complex to promote insertion of subsequent transmembrane regions. Within the MPT complex, the PAT subcomplex sequesters any highly polar regions in the transmembrane domains away from the non-polar membrane environment until they can be buried in the interior of the fully assembled protein. Within the PAT subcomplex, CCDC47 occludes the lateral gate of the SEC61 complex. Involved in the regulation of calcium ion homeostasis in the ER. Required for proper protein degradation via the ERAD (ER-associated degradation) pathway. Has an essential role in the maintenance of ER organization during embryogenesis. The sequence is that of PAT complex subunit CCDC47 from Homo sapiens (Human).